The chain runs to 1323 residues: Phosphoribosylformylglycinamidine synthase (1323 aa).

ATP-binding positions include Gly312–Asp323, Asn391–Tyr393, and Ala691. Mg(2+) is bound by residues Asp692, Glu733, Asn737, and Asp903. Residue Ser905 participates in ATP binding. One can recognise a Glutamine amidotransferase type-1 domain in the interval Val1062–Gly1306. The active-site Nucleophile is the Cys1156. Residues His1284 and Glu1286 contribute to the active site.

This sequence in the N-terminal section; belongs to the FGAMS family.

The protein resides in the cytoplasm. The enzyme catalyses N(2)-formyl-N(1)-(5-phospho-beta-D-ribosyl)glycinamide + L-glutamine + ATP + H2O = 2-formamido-N(1)-(5-O-phospho-beta-D-ribosyl)acetamidine + L-glutamate + ADP + phosphate + H(+). The protein operates within purine metabolism; IMP biosynthesis via de novo pathway; 5-amino-1-(5-phospho-D-ribosyl)imidazole from N(2)-formyl-N(1)-(5-phospho-D-ribosyl)glycinamide: step 1/2. Phosphoribosylformylglycinamidine synthase involved in the purines biosynthetic pathway. Catalyzes the ATP-dependent conversion of formylglycinamide ribonucleotide (FGAR) and glutamine to yield formylglycinamidine ribonucleotide (FGAM) and glutamate. The sequence is that of Phosphoribosylformylglycinamidine synthase (ade3) from Schizosaccharomyces pombe (strain 972 / ATCC 24843) (Fission yeast).